Consider the following 162-residue polypeptide: Dihydrofolate reductase type 3 (162 aa).

The 159-residue stretch at 2 to 160 (LISLIAALAH…YACEFVTLSR (159 aa)) folds into the DHFR domain.

This sequence belongs to the dihydrofolate reductase family. In terms of assembly, monomer.

It carries out the reaction (6S)-5,6,7,8-tetrahydrofolate + NADP(+) = 7,8-dihydrofolate + NADPH + H(+). Its pathway is cofactor biosynthesis; tetrahydrofolate biosynthesis; 5,6,7,8-tetrahydrofolate from 7,8-dihydrofolate: step 1/1. In terms of biological role, key enzyme in folate metabolism. Catalyzes an essential reaction for de novo glycine and purine synthesis, and for DNA precursor synthesis. This Salmonella typhimurium protein is Dihydrofolate reductase type 3 (dhfrIII).